Consider the following 346-residue polypeptide: Putative alpha/beta hydrolase R526 (346 aa).

The protein belongs to the AB hydrolase 3 family.

Its subcellular location is the virion. The protein is Putative alpha/beta hydrolase R526 of Acanthamoeba polyphaga mimivirus (APMV).